Consider the following 370-residue polypeptide: Accessory Sec system protein translocase subunit SecY2 (370 aa).

The next 9 membrane-spanning stretches (helical) occupy residues 17 to 37 (IIFTCWILLIYIFGTHIPAIT), 65 to 85 (VFSLGLGPWLTAMIFMTLFYY), 105 to 125 (IFTLILALIQAYFVVFTLLSH), 134 to 154 (WLIILVLVTGAMILVWLSDLN), 155 to 175 (MRFGIAGPMPIVMISIIRSIM), 188 to 208 (LLISAALVLIIILLVLIFIEI), 240 to 260 (IAIMISFAAFFVLNSAVNLIV), 276 to 296 (FSTPIGITIFLILQLVLSYGI), and 339 to 359 (WIGAFIVTIIIGIPLYATLLI).

It belongs to the SecY/SEC61-alpha family. SecY2 subfamily. As to quaternary structure, component of the accessory SecA2/SecY2 protein translocase complex required to export cell wall proteins. May form heterotrimers with SecE and SecG subunits.

It localises to the cell membrane. Functionally, part of the accessory SecA2/SecY2 system specifically required for export of possible cell wall proteins. The central subunit of a protein translocation channel. This is Accessory Sec system protein translocase subunit SecY2 from Staphylococcus carnosus (strain TM300).